The following is a 134-amino-acid chain: Small ribosomal subunit protein uS8c (134 aa).

Belongs to the universal ribosomal protein uS8 family. As to quaternary structure, part of the 30S ribosomal subunit.

It localises to the plastid. The protein resides in the chloroplast. One of the primary rRNA binding proteins, it binds directly to 16S rRNA central domain where it helps coordinate assembly of the platform of the 30S subunit. The protein is Small ribosomal subunit protein uS8c (rps8) of Gossypium barbadense (Sea Island cotton).